A 202-amino-acid chain; its full sequence is 3-isopropylmalate dehydratase small subunit (202 aa).

This sequence belongs to the LeuD family. LeuD type 1 subfamily. As to quaternary structure, heterodimer of LeuC and LeuD.

The enzyme catalyses (2R,3S)-3-isopropylmalate = (2S)-2-isopropylmalate. It participates in amino-acid biosynthesis; L-leucine biosynthesis; L-leucine from 3-methyl-2-oxobutanoate: step 2/4. In terms of biological role, catalyzes the isomerization between 2-isopropylmalate and 3-isopropylmalate, via the formation of 2-isopropylmaleate. The polypeptide is 3-isopropylmalate dehydratase small subunit (Nocardia farcinica (strain IFM 10152)).